A 218-amino-acid chain; its full sequence is Protein THO1 (218 aa).

One can recognise an SAP domain in the interval 4-38 (YSSLTVVQLKDLLTKRNLSVGGLKNELVQRLIKDD). Ser22 is subject to Phosphoserine. Disordered regions lie at residues 37–123 (DDEE…LSPE) and 177–218 (LVSR…GYRR). Residues 47–57 (VSPQEQNQEQG) are compositionally biased toward polar residues. 2 positions are modified to phosphoserine: Ser58 and Ser68. Residues 72–96 (TEKKEVSSEPKETNEPKEENKDVQK) show a composition bias toward basic and acidic residues. 2 stretches are compositionally biased toward low complexity: residues 102-122 (SATASENEQAAASTAAPALSP) and 186-203 (SGNNGKFKNRNKNANNRS). A compositionally biased stretch (basic residues) spans 204–218 (RVSKNRRGNRSGYRR).

The protein belongs to the SAP domain-containing ribonucleoprotein family. In terms of assembly, interacts with SUB2 in the presence of RNA; this interaction facilitates RNA binding of SUB2.

Functionally, facilitates RNA binding of SUB2 and likely plays a role in mRNA export. Suppressor of the transcriptional defect of HPR1 by overexpression. This Saccharomyces cerevisiae (strain ATCC 204508 / S288c) (Baker's yeast) protein is Protein THO1 (THO1).